Consider the following 107-residue polypeptide: U1-lycotoxin-Ls1w (107 aa).

The N-terminal stretch at 1 to 20 (MLKVLVVVALLVTLISYSSS) is a signal peptide. The propeptide occupies 21-41 (EGIDDLEADELLSLMANEQTR). 4 disulfides stabilise this stretch: cysteine 44–cysteine 59, cysteine 51–cysteine 68, cysteine 58–cysteine 86, and cysteine 70–cysteine 84.

Belongs to the neurotoxin 19 (CSTX) family. 04 (U1-Lctx) subfamily. In terms of tissue distribution, expressed by the venom gland.

It is found in the secreted. In Lycosa singoriensis (Wolf spider), this protein is U1-lycotoxin-Ls1w.